We begin with the raw amino-acid sequence, 100 residues long: Protein MEN-8 (100 aa).

Residues 1 to 33 form the signal peptide; it reads MANNMKSATFCKATWAIFLVALAILVQLKGSEA. 4 disulfide bridges follow: Cys38–Cys76, Cys48–Cys65, Cys66–Cys91, and Cys78–Cys98.

It belongs to the A9/FIL1 family.

It localises to the secreted. The protein is Protein MEN-8 (MEN-8) of Silene latifolia (White campion).